A 470-amino-acid polypeptide reads, in one-letter code: Ribulose bisphosphate carboxylase large chain (470 aa).

Residues Asn-115 and Thr-165 each contribute to the substrate site. Lys-167 (proton acceptor) is an active-site residue. Lys-169 contacts substrate. 3 residues coordinate Mg(2+): Lys-193, Asp-195, and Glu-196. Lys-193 is subject to N6-carboxylysine. The Proton acceptor role is filled by His-286. Substrate-binding residues include Arg-287, His-319, and Ser-371.

This sequence belongs to the RuBisCO large chain family. Type I subfamily. In terms of assembly, heterohexadecamer of 8 large chains and 8 small chains. Requires Mg(2+) as cofactor.

The protein resides in the carboxysome. It carries out the reaction 2 (2R)-3-phosphoglycerate + 2 H(+) = D-ribulose 1,5-bisphosphate + CO2 + H2O. It catalyses the reaction D-ribulose 1,5-bisphosphate + O2 = 2-phosphoglycolate + (2R)-3-phosphoglycerate + 2 H(+). Its function is as follows. RuBisCO catalyzes two reactions: the carboxylation of D-ribulose 1,5-bisphosphate, the primary event in carbon dioxide fixation, as well as the oxidative fragmentation of the pentose substrate in the photorespiration process. Both reactions occur simultaneously and in competition at the same active site. The polypeptide is Ribulose bisphosphate carboxylase large chain (Prochlorococcus marinus (strain SARG / CCMP1375 / SS120)).